A 144-amino-acid polypeptide reads, in one-letter code: Large ribosomal subunit protein uL15 (144 aa).

The disordered stretch occupies residues 1 to 53 (MRLNTLSPAEGAKHAPKRLGRGIGSGLGKTGGRGHKGQKSRSGGGVRRGFEGG). The segment covering 21-31 (RGIGSGLGKTG) has biased composition (gly residues).

Belongs to the universal ribosomal protein uL15 family. In terms of assembly, part of the 50S ribosomal subunit.

In terms of biological role, binds to the 23S rRNA. The sequence is that of Large ribosomal subunit protein uL15 from Pectobacterium carotovorum subsp. carotovorum (strain PC1).